Consider the following 212-residue polypeptide: Neuroendocrine protein 7B2 (212 aa).

The first 26 residues, 1–26 (MVSRMVSTMLSGLLFWLASGWTPAFA), serve as a signal peptide directing secretion. Cys120 and Cys130 are disulfide-bonded. Phosphoserine is present on residues Ser141 and Ser205. A disordered region spans residues 174–212 (GGERRKRRSVNPYLQGQRLDNVVAKKSVPHFSDEDKDPE).

The protein belongs to the 7B2 family. Interacts with PCSK2/PC2 early in the secretory pathway. Dissociation occurs at later stages. Proteolytically cleaved in the Golgi by a furin-like convertase to generate bioactive peptides. Post-translationally, sulfated on tyrosine residues.

Its subcellular location is the secreted. Its function is as follows. Acts as a molecular chaperone for PCSK2/PC2, preventing its premature activation in the regulated secretory pathway. Binds to inactive PCSK2 in the endoplasmic reticulum and facilitates its transport from there to later compartments of the secretory pathway where it is proteolytically matured and activated. Also required for cleavage of PCSK2 but does not appear to be involved in its folding. Plays a role in regulating pituitary hormone secretion. The C-terminal peptide inhibits PCSK2 in vitro. The protein is Neuroendocrine protein 7B2 (SCG5) of Homo sapiens (Human).